The following is a 388-amino-acid chain: Probable aspartic-type endopeptidase MCYG_06955 (388 aa).

An N-terminal signal peptide occupies residues 1–21 (MMGPFFYFTAYVSLLFAFTQA). 2 N-linked (GlcNAc...) asparagine glycosylation sites follow: Asn-82 and Asn-104. The Peptidase A1 domain occupies 96–384 (FVNEITVGND…DYDGPKIGFA (289 aa)). The active site involves Asp-112. 2 N-linked (GlcNAc...) asparagine glycosylation sites follow: Asn-209 and Asn-261. Residue Asp-278 is part of the active site. N-linked (GlcNAc...) asparagine glycosylation is found at Asn-315 and Asn-320.

The protein belongs to the peptidase A1 family.

The protein localises to the secreted. Its function is as follows. Probable aspartic-type endopeptidase which contributes to virulence. The sequence is that of Probable aspartic-type endopeptidase MCYG_06955 from Arthroderma otae (strain ATCC MYA-4605 / CBS 113480) (Microsporum canis).